Reading from the N-terminus, the 827-residue chain is Periplasmic nitrate reductase (827 aa).

The tat-type signal signal peptide spans 1–34 (MSLTRRDFIKANAVAATAAAAGIATPAIAQPAKA). Positions 36–92 (IRWDKGVCRFCGTGCAVLVGVQDGRVVATQGDPDSPVNRGLNCIKGYFLSKIMYGED) constitute a 4Fe-4S Mo/W bis-MGD-type domain. Residues C43, C46, C50, and C78 each contribute to the [4Fe-4S] cluster site. Residues K80, Q148, N173, C177, 210–217 (WGSNMAEM), 241–245 (STFEH), 260–262 (QTD), M371, Q375, N481, 507–508 (SD), K530, D557, and 717–726 (TGRVLEHWHS) contribute to the Mo-bis(molybdopterin guanine dinucleotide) site. F793 contributes to the substrate binding site. Positions 801 and 818 each coordinate Mo-bis(molybdopterin guanine dinucleotide).

This sequence belongs to the prokaryotic molybdopterin-containing oxidoreductase family. NasA/NapA/NarB subfamily. Component of the periplasmic nitrate reductase NapAB complex composed of NapA and NapB. [4Fe-4S] cluster is required as a cofactor. The cofactor is Mo-bis(molybdopterin guanine dinucleotide). Predicted to be exported by the Tat system. The position of the signal peptide cleavage has not been experimentally proven.

The protein resides in the periplasm. The enzyme catalyses 2 Fe(II)-[cytochrome] + nitrate + 2 H(+) = 2 Fe(III)-[cytochrome] + nitrite + H2O. Functionally, catalytic subunit of the periplasmic nitrate reductase complex NapAB. Receives electrons from NapB and catalyzes the reduction of nitrate to nitrite. The sequence is that of Periplasmic nitrate reductase from Paramagnetospirillum magneticum (strain ATCC 700264 / AMB-1) (Magnetospirillum magneticum).